The sequence spans 518 residues: Squalene monooxygenase 1,2 (518 aa).

Helical transmembrane passes span 3–23 (MAFVEVCLRMLLVFVLSWTIF) and 48–68 (GPDVIIVGAGVGGSALAYALA). FAD is bound by residues 58–59 (VG), 78–79 (ER), Arg-86, Phe-91, Arg-158, Val-174, Asp-337, and Met-350. The helical transmembrane segment at 448–468 (LFYHLFVISLSSIGQLLSPFP) threads the bilayer.

It belongs to the squalene monooxygenase family. FAD serves as cofactor.

It localises to the membrane. The enzyme catalyses squalene + reduced [NADPH--hemoprotein reductase] + O2 = (S)-2,3-epoxysqualene + oxidized [NADPH--hemoprotein reductase] + H2O + H(+). Its pathway is terpene metabolism; lanosterol biosynthesis; lanosterol from farnesyl diphosphate: step 2/3. In terms of biological role, catalyzes the stereospecific oxidation of squalene to (S)-2,3-epoxysqualene, and is considered to be a rate-limiting enzyme in steroid biosynthesis. The chain is Squalene monooxygenase 1,2 (SQP1,2) from Brassica napus (Rape).